Consider the following 307-residue polypeptide: MDEHPPPPFPTVGIIGKPGDPAIAGLVERLLPMLEARGCTALLDEQSMPETGDDRHPQRVSRETLLDACDLIIAIGGDGTLIHIARAVAGRRDVALMGINRGRLGFLVDIAPEHLDEVAQILDGQHVVDERLLLHAEIRSNEDDTLLREDVAINEVVLHRWNTARMIELVTRIDGEPLSDHRSDGLILATPTGSTAYAMAGGGPIVHPNLHAMLLVPVCPHTLSNRPLVVDGSSRIEIDVHPRFIEHVRVSCDSQNDLTLQAGSRLVVRAHPSPVRLVHPPGYSYFNLLRAKLGWGGPLCNIEPFGA.

Catalysis depends on Asp78, which acts as the Proton acceptor. NAD(+) is bound by residues 78–79 (DG), His83, 154–155 (NE), Arg165, Arg182, Asp184, and Gln255.

It belongs to the NAD kinase family. Requires a divalent metal cation as cofactor.

The protein localises to the cytoplasm. It carries out the reaction NAD(+) + ATP = ADP + NADP(+) + H(+). In terms of biological role, involved in the regulation of the intracellular balance of NAD and NADP, and is a key enzyme in the biosynthesis of NADP. Catalyzes specifically the phosphorylation on 2'-hydroxyl of the adenosine moiety of NAD to yield NADP. This Halorhodospira halophila (strain DSM 244 / SL1) (Ectothiorhodospira halophila (strain DSM 244 / SL1)) protein is NAD kinase.